The sequence spans 711 residues: Interferon-induced GTP-binding protein Mx2 (711 aa).

Disordered regions lie at residues 1 to 26 and 62 to 88; these read MPKP…HKEM and MLTL…NLYS. Positions 66 to 82 are enriched in low complexity; that stretch reads SPQQPGGKSGQQTSKGP. One can recognise a Dynamin-type G domain in the interval 112–383; that stretch reads DLALPTIAVI…LIGHISKSLP (272 aa). The G1 motif stretch occupies residues 122-129; it reads GDQSSGKS. 122–129 lines the GTP pocket; that stretch reads GDQSSGKS. Residues 147–149 are G2 motif; that stretch reads ITR. The segment at 221-224 is G3 motif; the sequence is DLPG. GTP contacts are provided by residues 221 to 225 and 290 to 293; these read DLPGI and TKPD. Residues 290–293 are G4 motif; the sequence is TKPD. A G5 motif region spans residues 322–325; the sequence is KCRG. The GED domain maps to 619–710; sequence ITEIGVHVNA…TLSKFAQSLQ (92 aa).

Belongs to the TRAFAC class dynamin-like GTPase superfamily. Dynamin/Fzo/YdjA family. In terms of tissue distribution, ubiquitous.

Its subcellular location is the cytoplasm. The protein localises to the nucleus. In terms of biological role, interferon-induced dynamin-like GTPase with antiviral activity against influenza virus A (FLUAV). In Sus scrofa (Pig), this protein is Interferon-induced GTP-binding protein Mx2 (MX2).